The primary structure comprises 473 residues: Glycine--tRNA ligase (473 aa).

Substrate-binding residues include Arg101 and Glu172. Residues 204-206, 214-219, 289-290, and 333-336 contribute to the ATP site; these read RNE, FRTREF, EL, and GVER. 219–223 serves as a coordination point for substrate; sequence FEQME. Residue 329 to 333 coordinates substrate; that stretch reads EPSVG.

Belongs to the class-II aminoacyl-tRNA synthetase family. As to quaternary structure, homodimer.

It localises to the cytoplasm. It catalyses the reaction tRNA(Gly) + glycine + ATP = glycyl-tRNA(Gly) + AMP + diphosphate. Catalyzes the attachment of glycine to tRNA(Gly). The protein is Glycine--tRNA ligase of Ureaplasma parvum serovar 3 (strain ATCC 27815 / 27 / NCTC 11736).